The chain runs to 367 residues: Glutamate 5-kinase (367 aa).

An ATP-binding site is contributed by K10. 3 residues coordinate substrate: S50, D137, and N149. ATP-binding positions include 169 to 170 (TD) and 211 to 217 (TGGMSTK). A PUA domain is found at 275–353 (AGEITVDEGA…QEIDAILGYE (79 aa)).

The protein belongs to the glutamate 5-kinase family.

The protein localises to the cytoplasm. The enzyme catalyses L-glutamate + ATP = L-glutamyl 5-phosphate + ADP. The protein operates within amino-acid biosynthesis; L-proline biosynthesis; L-glutamate 5-semialdehyde from L-glutamate: step 1/2. Its function is as follows. Catalyzes the transfer of a phosphate group to glutamate to form L-glutamate 5-phosphate. The chain is Glutamate 5-kinase from Escherichia fergusonii (strain ATCC 35469 / DSM 13698 / CCUG 18766 / IAM 14443 / JCM 21226 / LMG 7866 / NBRC 102419 / NCTC 12128 / CDC 0568-73).